The following is a 495-amino-acid chain: Bile acid-sensitive ion channel (495 aa).

The interval 1 to 30 (MEHTEKSQVHAEKGLLGKIKRYLSKRPLPS) is binds the plasma membrane and stabilizes the channel in the closed state. Topologically, residues 1–61 (MEHTEKSQVH…NIAQNQNKVR (61 aa)) are cytoplasmic. Residues 62–82 (KVIWLAVVLGSVSLLVWQIYS) form a helical membrane-spanning segment. Topologically, residues 83-459 (RLVNYFTWPT…GLFCGASLIT (377 aa)) are extracellular. 6 disulfides stabilise this stretch: Cys112/Cys207, Cys185/Cys192, Cys298/Cys377, Cys315/Cys373, Cys328/Cys350, and Cys330/Cys342. N-linked (GlcNAc...) asparagine glycosylation is found at Asn147, Asn163, and Asn179. Asn370, Asn405, and Asn421 each carry an N-linked (GlcNAc...) asparagine glycan. The GAS motif; ion selectivity filter signature appears at 454–456 (GAS). Residues 460-480 (IIEIIEYFFTNFYWVLIFFLL) form a helical membrane-spanning segment. Topologically, residues 481–495 (KILETIQRTSPPQAV) are cytoplasmic.

Belongs to the amiloride-sensitive sodium channel (TC 1.A.6) family. ASIC5 subfamily. In terms of assembly, forms homotrimeric channels. As to expression, expressed by cholangiocytes (at protein level). Detected in cerebellum, brainstem, kidney, liver, hepatocytes, lung, intestine and embryo. In the cerebellum, restricted to interneurons in the granular layer, specifically in GRM1-expressing unipolar brush cells of the vestibulocerebellum.

The protein resides in the apical cell membrane. Its subcellular location is the cell membrane. It carries out the reaction Na(+)(in) = Na(+)(out). The catalysed reaction is Li(+)(in) = Li(+)(out). The enzyme catalyses K(+)(in) = K(+)(out). It catalyses the reaction H(+)(in) = H(+)(out). Its activity is regulated as follows. Inhibited by the diuretic drug amiloride. Contrary to its rat ortholog it is not inhibited by Ca(2+). Functionally, forms bile acid-gated sodium channels and may play a role in bile acid-dependent absorption and secretion by epithelial cells of the bile ducts. Displays high selectivity for sodium ions but can also permit the permeation of other cations. The gating could be indirect and the consequence of alterations of the membrane environment of the channel by bile acids. As a sodium channel of type II unipolar brush cells of the vestibulocerebellum, controlling the electrical activity of these cells, could play a role in motor coordination and balance. The polypeptide is Bile acid-sensitive ion channel (Mus musculus (Mouse)).